Reading from the N-terminus, the 148-residue chain is Cytochrome c-type biogenesis protein CcmE (148 aa).

The Cytoplasmic portion of the chain corresponds to 1–7 (MKPRNRR). The helical; Signal-anchor for type II membrane protein transmembrane segment at 8 to 28 (IALIVAGLSALGIATALVLNA) threads the bilayer. At 29–148 (FQSNLVFFFT…VQKKPASRKP (120 aa)) the chain is on the periplasmic side. Heme is bound by residues H123 and Y127. The interval 128–148 (MPPEAQHALDEVQKKPASRKP) is disordered.

This sequence belongs to the CcmE/CycJ family.

It localises to the cell inner membrane. In terms of biological role, heme chaperone required for the biogenesis of c-type cytochromes. Transiently binds heme delivered by CcmC and transfers the heme to apo-cytochromes in a process facilitated by CcmF and CcmH. In Pseudomonas aeruginosa, this protein is Cytochrome c-type biogenesis protein CcmE.